The chain runs to 501 residues: MTVLVSLSGISKNFSGVQALKGVDFDLRAGEVHALVGENGAGKSTLMRVLAGEMKPTSGTVSIHGETMQHSGPRGAAGRGISVIHQELALAPDLTVAENIFLGRLPRIVNHRRLRKAASEILERLGFDIDPAIHAGRLTVAHQQVVEIAKALSNRARIIVFDEPTAVLANTDAERLLAIIRELRAGGTGAVYISHRLNEVFDLSDRITVMKDGSHVETLETSATDVDAVIARMVGRQMSALFPSKAGRVPGEVVVRVRNVSRGRKVRDVSFSVRAGEVVGLGGLVGSGRTEVARLVFGADKMDSGTVELNGKPLHLSSPREAVRARIGLVPEDRKQQGVILDAPIRINTTLAKIRSISRLGFLDAGKERQVAVALGAEMRLKASSVDAPVSSLSGGNQQKVALAKWFHADCDLLILDEPTRGVDVGAKGEIYNLINDLAKAGKAILVISSEHQELFGICDRVLVMAEGAIVGELTESKFTEQQLLTLAMTRSARERDETSQ.

ABC transporter domains follow at residues 5 to 237 (VSLS…VGRQ) and 249 to 492 (VPGE…MTRS). ATP is bound at residue 37–44 (GENGAGKS).

Belongs to the ABC transporter superfamily. Carbohydrate importer 2 (CUT2) (TC 3.A.1.2) family.

The protein localises to the cell inner membrane. It catalyses the reaction D-ribose(out) + ATP + H2O = D-ribose(in) + ADP + phosphate + H(+). The enzyme catalyses D-galactose(out) + ATP + H2O = D-galactose(in) + ADP + phosphate + H(+). Its function is as follows. Part of an ABC transporter complex involved in carbohydrate import. Could be involved in ribose, galactose and/or methyl galactoside import. Responsible for energy coupling to the transport system. The sequence is that of Putative ribose/galactose/methyl galactoside import ATP-binding protein 1 from Rhizobium meliloti (strain 1021) (Ensifer meliloti).